A 422-amino-acid polypeptide reads, in one-letter code: Bifunctional enzyme IspD/IspF (422 aa).

The interval 1–267 (MAVGLLLLAA…PISALSMPLP (267 aa)) is 2-C-methyl-D-erythritol 4-phosphate cytidylyltransferase. A 2-C-methyl-D-erythritol 2,4-cyclodiphosphate synthase region spans residues 268–422 (LIGVGIDFHK…AIAVAQIYHR (155 aa)). Residues D274 and H276 each coordinate a divalent metal cation. Residues 274–276 (DFH) and 301–302 (HS) contribute to the 4-CDP-2-C-methyl-D-erythritol 2-phosphate site. H309 provides a ligand contact to a divalent metal cation. Residues 323-325 (DIG), F404, and R407 each bind 4-CDP-2-C-methyl-D-erythritol 2-phosphate.

It in the N-terminal section; belongs to the IspD/TarI cytidylyltransferase family. IspD subfamily. In the C-terminal section; belongs to the IspF family. The cofactor is a divalent metal cation.

The catalysed reaction is 2-C-methyl-D-erythritol 4-phosphate + CTP + H(+) = 4-CDP-2-C-methyl-D-erythritol + diphosphate. The enzyme catalyses 4-CDP-2-C-methyl-D-erythritol 2-phosphate = 2-C-methyl-D-erythritol 2,4-cyclic diphosphate + CMP. The protein operates within isoprenoid biosynthesis; isopentenyl diphosphate biosynthesis via DXP pathway; isopentenyl diphosphate from 1-deoxy-D-xylulose 5-phosphate: step 2/6. It functions in the pathway isoprenoid biosynthesis; isopentenyl diphosphate biosynthesis via DXP pathway; isopentenyl diphosphate from 1-deoxy-D-xylulose 5-phosphate: step 4/6. Bifunctional enzyme that catalyzes the formation of 4-diphosphocytidyl-2-C-methyl-D-erythritol from CTP and 2-C-methyl-D-erythritol 4-phosphate (MEP) (IspD), and catalyzes the conversion of 4-diphosphocytidyl-2-C-methyl-D-erythritol 2-phosphate (CDP-ME2P) to 2-C-methyl-D-erythritol 2,4-cyclodiphosphate (ME-CPP) with a corresponding release of cytidine 5-monophosphate (CMP) (IspF). The sequence is that of Bifunctional enzyme IspD/IspF from Tropheryma whipplei (strain TW08/27) (Whipple's bacillus).